A 98-amino-acid polypeptide reads, in one-letter code: Tan_12Cys (98 aa).

The N-terminal stretch at 1-21 (MNLKVLFLLAMVLVTLCLGED) is a signal peptide. A propeptide spanning residues 22-28 (RVTDRRK) is cleaved from the precursor.

Belongs to the teretoxin C (TC) superfamily. Post-translationally, contains 6 disulfide bonds. As to expression, expressed by the venom duct.

It localises to the secreted. This Terebra anilis (Auger snail) protein is Tan_12Cys.